The following is a 187-amino-acid chain: UPF0301 protein YqgE (187 aa).

It belongs to the UPF0301 (AlgH) family.

This chain is UPF0301 protein YqgE, found in Escherichia coli O127:H6 (strain E2348/69 / EPEC).